Here is a 349-residue protein sequence, read N- to C-terminus: DNA-directed RNA polymerase subunit alpha (349 aa).

The alpha N-terminal domain (alpha-NTD) stretch occupies residues 1–226 (MLIAQRPTLV…GLFGLAQELN (226 aa)). The segment at 241–349 (AALAADLALP…GAEFVETEQY (109 aa)) is alpha C-terminal domain (alpha-CTD). Residues 308-349 (LKDSPPGFDPRQAVDTYGTDSYNPAFSDPSDDGAEFVETEQY) form a disordered region. Positions 336–349 (PSDDGAEFVETEQY) are enriched in acidic residues.

This sequence belongs to the RNA polymerase alpha chain family. As to quaternary structure, homodimer. The RNAP catalytic core consists of 2 alpha, 1 beta, 1 beta' and 1 omega subunit. When a sigma factor is associated with the core the holoenzyme is formed, which can initiate transcription.

It catalyses the reaction RNA(n) + a ribonucleoside 5'-triphosphate = RNA(n+1) + diphosphate. Functionally, DNA-dependent RNA polymerase catalyzes the transcription of DNA into RNA using the four ribonucleoside triphosphates as substrates. The protein is DNA-directed RNA polymerase subunit alpha of Frankia alni (strain DSM 45986 / CECT 9034 / ACN14a).